Consider the following 103-residue polypeptide: Iron-sulfur cluster assembly protein CyaY (103 aa).

It belongs to the frataxin family.

Its function is as follows. Involved in iron-sulfur (Fe-S) cluster assembly. May act as a regulator of Fe-S biogenesis. In Rickettsia rickettsii (strain Iowa), this protein is Iron-sulfur cluster assembly protein CyaY.